The sequence spans 285 residues: Protease HtpX homolog (285 aa).

The next 2 membrane-spanning stretches (helical) occupy residues 7-27 (TAMLMAAITALFIVIGGMIGG) and 30-50 (GMTIALLFALGMNFFSYWFSD). Zn(2+) is bound at residue H131. E132 is a catalytic residue. H135 serves as a coordination point for Zn(2+). Transmembrane regions (helical) follow at residues 146 to 166 (ITATMAGAISALANFAMFFGG) and 177 to 197 (IAGIAVALLAPIAGALIQMAI). A Zn(2+)-binding site is contributed by E202.

It belongs to the peptidase M48B family. It depends on Zn(2+) as a cofactor.

The protein localises to the cell inner membrane. The polypeptide is Protease HtpX homolog (Burkholderia cenocepacia (strain HI2424)).